Consider the following 322-residue polypeptide: Cytochrome c biogenesis protein CcsA (322 aa).

The next 8 helical transmembrane spans lie at 19–39 (NAIFCNLLLTMCLYWFSLIIV), 43–63 (LICNLAKFSAVNSNVILFFYL), 72–92 (FFPLSNLYESLMFLSCLLLFI), 104–124 (VIGALVLPLIVLVQGFASLSL), 150–170 (MMLSYATLLLGSLFSILYLVL), 230–250 (TIGIGFPFLTMGIISGAVWAN), 264–281 (TWALITWLIFASYLHARL), and 291–311 (AFLGSFGFFIVWVCYLGVNFL).

This sequence belongs to the CcmF/CycK/Ccl1/NrfE/CcsA family. May interact with Ccs1.

The protein resides in the plastid. It localises to the chloroplast thylakoid membrane. In terms of biological role, required during biogenesis of c-type cytochromes (cytochrome c6 and cytochrome f) at the step of heme attachment. The protein is Cytochrome c biogenesis protein CcsA of Heterosigma akashiwo (strain NIES-293 / 8280G21-1).